Reading from the N-terminus, the 275-residue chain is Large ribosomal subunit protein uL2 (275 aa).

Positions 35 to 49 are enriched in polar residues; it reads DSQSSTAGRNNNGRI. Disordered stretches follow at residues 35-59 and 224-275; these read DSQS…GGHK and AMNP…RHKR. The segment covering 50–59 has biased composition (basic residues); it reads TTRHKGGGHK.

Belongs to the universal ribosomal protein uL2 family. In terms of assembly, part of the 50S ribosomal subunit. Forms a bridge to the 30S subunit in the 70S ribosome.

In terms of biological role, one of the primary rRNA binding proteins. Required for association of the 30S and 50S subunits to form the 70S ribosome, for tRNA binding and peptide bond formation. It has been suggested to have peptidyltransferase activity; this is somewhat controversial. Makes several contacts with the 16S rRNA in the 70S ribosome. This chain is Large ribosomal subunit protein uL2, found in Burkholderia cenocepacia (strain HI2424).